Here is a 221-residue protein sequence, read N- to C-terminus: MFQQFQASCLVLFFLVGFAQQTLKPQNRKVDCNKGVTGTIYEYGALTLNGEEYIQFKQFAGKHVLFVNVAAYUGLAAQYPELNALQEELKNFGVIVLAFPCNQFGKQEPGTNSEILLGLKYVCPGSGFVPSFQLFEKGDVNGEKEQKVFTFLKNSCPPTSDLLGSSSQLFWEPMKVHDIRWNFEKFLVGPDGVPVMHWFHQAPVSTVKSDILEYLKQFNTH.

The N-terminal stretch at 1 to 19 (MFQQFQASCLVLFFLVGFA) is a signal peptide. Selenocysteine 73 is a catalytic residue. Residue selenocysteine 73 is a non-standard amino acid, selenocysteine.

It belongs to the glutathione peroxidase family. In terms of tissue distribution, expressed in olfactory epithelium and embryos.

The protein resides in the secreted. The enzyme catalyses 2 glutathione + H2O2 = glutathione disulfide + 2 H2O. The polypeptide is Glutathione peroxidase 6 (GPX6) (Homo sapiens (Human)).